Reading from the N-terminus, the 199-residue chain is UPF0637 protein LVIS_1261 (199 aa).

The protein belongs to the UPF0637 family.

This is UPF0637 protein LVIS_1261 from Levilactobacillus brevis (strain ATCC 367 / BCRC 12310 / CIP 105137 / JCM 1170 / LMG 11437 / NCIMB 947 / NCTC 947) (Lactobacillus brevis).